The sequence spans 173 residues: Crossover junction endodeoxyribonuclease RuvC (173 aa).

Active-site residues include Asp-8, Glu-67, and Asp-139. 3 residues coordinate Mg(2+): Asp-8, Glu-67, and Asp-139.

It belongs to the RuvC family. As to quaternary structure, homodimer which binds Holliday junction (HJ) DNA. The HJ becomes 2-fold symmetrical on binding to RuvC with unstacked arms; it has a different conformation from HJ DNA in complex with RuvA. In the full resolvosome a probable DNA-RuvA(4)-RuvB(12)-RuvC(2) complex forms which resolves the HJ. Requires Mg(2+) as cofactor.

It localises to the cytoplasm. It catalyses the reaction Endonucleolytic cleavage at a junction such as a reciprocal single-stranded crossover between two homologous DNA duplexes (Holliday junction).. In terms of biological role, the RuvA-RuvB-RuvC complex processes Holliday junction (HJ) DNA during genetic recombination and DNA repair. Endonuclease that resolves HJ intermediates. Cleaves cruciform DNA by making single-stranded nicks across the HJ at symmetrical positions within the homologous arms, yielding a 5'-phosphate and a 3'-hydroxyl group; requires a central core of homology in the junction. The consensus cleavage sequence is 5'-(A/T)TT(C/G)-3'. Cleavage occurs on the 3'-side of the TT dinucleotide at the point of strand exchange. HJ branch migration catalyzed by RuvA-RuvB allows RuvC to scan DNA until it finds its consensus sequence, where it cleaves and resolves the cruciform DNA. This Klebsiella pneumoniae (strain 342) protein is Crossover junction endodeoxyribonuclease RuvC.